Reading from the N-terminus, the 469-residue chain is 3-isopropylmalate dehydratase large subunit (469 aa).

[4Fe-4S] cluster-binding residues include Cys347, Cys408, and Cys411.

Belongs to the aconitase/IPM isomerase family. LeuC type 1 subfamily. As to quaternary structure, heterodimer of LeuC and LeuD. [4Fe-4S] cluster serves as cofactor.

The enzyme catalyses (2R,3S)-3-isopropylmalate = (2S)-2-isopropylmalate. It participates in amino-acid biosynthesis; L-leucine biosynthesis; L-leucine from 3-methyl-2-oxobutanoate: step 2/4. Functionally, catalyzes the isomerization between 2-isopropylmalate and 3-isopropylmalate, via the formation of 2-isopropylmaleate. This Actinobacillus succinogenes (strain ATCC 55618 / DSM 22257 / CCUG 43843 / 130Z) protein is 3-isopropylmalate dehydratase large subunit.